The following is a 487-amino-acid chain: E3 ubiquitin-protein ligase RNF8 (487 aa).

Residues Val-38–Leu-92 form the FHA domain. The required for interaction with PIWIL1 stretch occupies residues Gln-68–Gly-72. 2 disordered regions span residues Met-143–Ile-176 and Glu-182–Glu-201. Ser-157 carries the phosphoserine modification. The RING-type zinc-finger motif lies at Cys-405–Arg-443.

The protein belongs to the RNF8 family. In terms of assembly, homodimer. Forms a E2-E3 ubiquitin ligase complex composed of the RNF8 homodimer and a E2 heterodimer of UBE2N and UBE2V2. Interacts with class III E2s, including UBE2E1, UBE2E2, and UBE2E3 and with UBE2N. Interacts with RXRA. Interacts (via FHA domain) with phosphorylated HERC2 (via C-terminus). Interacts with PIWIL1; leading to sequester RNF8 in the cytoplasm. Interacts with WRAP53/TCAB1. Autoubiquitinated through 'Lys-48' and 'Lys-63' of ubiquitin. 'Lys-63' polyubiquitination is mediated by UBE2N. 'Lys-29'-type polyubiquitination is also observed, but it doesn't require its own functional RING-type zinc finger.

Its subcellular location is the nucleus. It is found in the cytoplasm. The protein resides in the midbody. It localises to the chromosome. The protein localises to the telomere. It catalyses the reaction S-ubiquitinyl-[E2 ubiquitin-conjugating enzyme]-L-cysteine + [acceptor protein]-L-lysine = [E2 ubiquitin-conjugating enzyme]-L-cysteine + N(6)-ubiquitinyl-[acceptor protein]-L-lysine.. The protein operates within protein modification; protein ubiquitination. Its function is as follows. E3 ubiquitin-protein ligase that plays a key role in DNA damage signaling via 2 distinct roles: by mediating the 'Lys-63'-linked ubiquitination of histones H2A and H2AX and promoting the recruitment of DNA repair proteins at double-strand breaks (DSBs) sites, and by catalyzing 'Lys-48'-linked ubiquitination to remove target proteins from DNA damage sites. Following DNA DSBs, it is recruited to the sites of damage by ATM-phosphorylated MDC1 and catalyzes the 'Lys-63'-linked ubiquitination of histones H2A and H2AX, thereby promoting the formation of TP53BP1 and BRCA1 ionizing radiation-induced foci (IRIF). Also controls the recruitment of UIMC1-BRCC3 (RAP80-BRCC36) and PAXIP1/PTIP to DNA damage sites. Promotes the recruitment of NBN to DNA damage sites by catalyzing 'Lys-6'-linked ubiquitination of NBN. Also recruited at DNA interstrand cross-links (ICLs) sites and catalyzes 'Lys-63'-linked ubiquitination of histones H2A and H2AX, leading to recruitment of FAAP20 and Fanconi anemia (FA) complex, followed by interstrand cross-link repair. H2A ubiquitination also mediates the ATM-dependent transcriptional silencing at regions flanking DSBs in cis, a mechanism to avoid collision between transcription and repair intermediates. Promotes the formation of 'Lys-63'-linked polyubiquitin chains via interactions with the specific ubiquitin-conjugating UBE2N/UBC13 and ubiquitinates non-histone substrates such as PCNA. Substrates that are polyubiquitinated at 'Lys-63' are usually not targeted for degradation. Also catalyzes the formation of 'Lys-48'-linked polyubiquitin chains via interaction with the ubiquitin-conjugating UBE2L6/UBCH8, leading to degradation of substrate proteins such as CHEK2, JMJD2A/KDM4A and KU80/XRCC5: it is still unclear how the preference toward 'Lys-48'- versus 'Lys-63'-linked ubiquitination is regulated but it could be due to RNF8 ability to interact with specific E2 specific ligases. For instance, interaction with phosphorylated HERC2 promotes the association between RNF8 and UBE2N/UBC13 and favors the specific formation of 'Lys-63'-linked ubiquitin chains. Promotes non-homologous end joining (NHEJ) by promoting the 'Lys-48'-linked ubiquitination and degradation the of KU80/XRCC5. Following DNA damage, mediates the ubiquitination and degradation of JMJD2A/KDM4A in collaboration with RNF168, leading to unmask H4K20me2 mark and promote the recruitment of TP53BP1 at DNA damage sites. Following DNA damage, mediates the ubiquitination and degradation of POLD4/p12, a subunit of DNA polymerase delta. In the absence of POLD4, DNA polymerase delta complex exhibits higher proofreading activity. In addition to its function in damage signaling, also plays a role in higher-order chromatin structure by mediating extensive chromatin decondensation. Involved in the activation of ATM by promoting histone H2B ubiquitination, which indirectly triggers histone H4 'Lys-16' acetylation (H4K16ac), establishing a chromatin environment that promotes efficient activation of ATM kinase. Required in the testis, where it plays a role in the replacement of histones during spermatogenesis. At uncapped telomeres, promotes the joining of deprotected chromosome ends by inducing H2A ubiquitination and TP53BP1 recruitment, suggesting that it may enhance cancer development by aggravating telomere-induced genome instability in case of telomeric crisis. Promotes the assembly of RAD51 at DNA DSBs in the absence of BRCA1 and TP53BP1 Also involved in class switch recombination in immune system, via its role in regulation of DSBs repair. May be required for proper exit from mitosis after spindle checkpoint activation and may regulate cytokinesis. May play a role in the regulation of RXRA-mediated transcriptional activity. Not involved in RXRA ubiquitination by UBE2E2. This is E3 ubiquitin-protein ligase RNF8 from Bos taurus (Bovine).